A 317-amino-acid chain; its full sequence is Acetyl-coenzyme A carboxylase carboxyl transferase subunit beta (317 aa).

A CoA carboxyltransferase N-terminal domain is found at 30-299; sequence LWTKCVACTA…VLPPLNVREK (270 aa). Zn(2+) is bound by residues Cys34, Cys37, Cys53, and Cys56. The segment at 34–56 adopts a C4-type zinc-finger fold; it reads CVACTALTYTKDLQANQLVCTEC.

Belongs to the AccD/PCCB family. Acetyl-CoA carboxylase is a heterohexamer composed of biotin carboxyl carrier protein (AccB), biotin carboxylase (AccC) and two subunits each of ACCase subunit alpha (AccA) and ACCase subunit beta (AccD). Requires Zn(2+) as cofactor.

The protein localises to the cytoplasm. It carries out the reaction N(6)-carboxybiotinyl-L-lysyl-[protein] + acetyl-CoA = N(6)-biotinyl-L-lysyl-[protein] + malonyl-CoA. It functions in the pathway lipid metabolism; malonyl-CoA biosynthesis; malonyl-CoA from acetyl-CoA: step 1/1. Component of the acetyl coenzyme A carboxylase (ACC) complex. Biotin carboxylase (BC) catalyzes the carboxylation of biotin on its carrier protein (BCCP) and then the CO(2) group is transferred by the transcarboxylase to acetyl-CoA to form malonyl-CoA. The sequence is that of Acetyl-coenzyme A carboxylase carboxyl transferase subunit beta from Crocosphaera subtropica (strain ATCC 51142 / BH68) (Cyanothece sp. (strain ATCC 51142)).